The sequence spans 619 residues: Leucine aminopeptidase 2 (619 aa).

Residues 141 to 143 and 273 to 278 contribute to the a peptide site; these read QCQ and PYGGME. Histidine 302 is a binding site for Zn(2+). The Proton acceptor role is filled by glutamate 303. Zn(2+)-binding residues include histidine 306 and glutamate 325. Tyrosine 390 acts as the Proton donor in catalysis.

It belongs to the peptidase M1 family. The cofactor is Zn(2+).

It localises to the cytoplasm. The protein localises to the nucleus. It carries out the reaction an epoxide + H2O = an ethanediol. Functionally, aminopeptidase that preferentially cleaves di- and tripeptides. Also has low epoxide hydrolase activity (in vitro). Can hydrolyze the epoxide leukotriene LTA(4) but it forms preferentially 5,6-dihydroxy-7,9,11,14-eicosatetraenoic acid rather than the cytokine leukotriene B(4) as the product compared to the homologous mammalian enzyme (in vitro). This chain is Leucine aminopeptidase 2, found in Coccidioides immitis (strain RS) (Valley fever fungus).